The following is a 440-amino-acid chain: Gamma-aminobutyric acid receptor subunit pi (440 aa).

Positions 1–23 (MKRSLHLTFVCLSLFSARMCVQG) are cleaved as a signal peptide. Residues 24 to 241 (NQFNIEVSRS…LVLQFELQRN (218 aa)) are Extracellular-facing. Asn43, Asn102, and Asn145 each carry an N-linked (GlcNAc...) asparagine glycan. The cysteines at positions 160 and 174 are disulfide-linked. N-linked (GlcNAc...) asparagine glycans are attached at residues Asn196 and Asn228. A helical transmembrane segment spans residues 242–262 (VLYFILETYVPSTFLVVLSWV). At 263–270 (SFWISLDS) the chain is on the cytoplasmic side. The chain crosses the membrane as a helical span at residues 271-290 (VPARTCIGVTTVLSMTTLMI). Topologically, residues 291–301 (GSRTSLPNTNC) are extracellular. Residues 302 to 322 (FIKAIDVYLGICFSFVFGALL) traverse the membrane as a helical segment. Residues 323–419 (EYAVAHYSSL…NPSNVDRYSK (97 aa)) are Cytoplasmic-facing. A helical membrane pass occupies residues 420-440 (LLFPLIFMLANVFYWAYYMYF).

The protein belongs to the ligand-gated ion channel (TC 1.A.9) family. Gamma-aminobutyric acid receptor (TC 1.A.9.5) subfamily. GABRP sub-subfamily. In terms of assembly, heteropentamer, formed by a combination of alpha (GABRA1-6), beta (GABRB1-3), gamma (GABRG1-3), delta (GABRD), epsilon (GABRE), rho (GABRR1-3), pi (GABRP) and theta (GABRQ) chains, each subunit exhibiting distinct physiological and pharmacological properties.

The protein localises to the cell membrane. It is found in the apical cell membrane. The enzyme catalyses chloride(in) = chloride(out). In terms of biological role, pi subunit of the heteropentameric ligand-gated chloride channel gated by gamma-aminobutyric acid (GABA). GABA-gated chloride channels, also named GABA(A) receptors (GABAAR), consist of five subunits arranged around a central pore and contain GABA active binding site(s) located at the alpha and beta subunit interfaces. When activated by GABA, GABAARs selectively allow the flow of chloride anions across the cell membrane down their electrochemical gradient. Pi-containing GABAARs are mostly located in peripheral tissues. In the uterus, pi subunits modulate uterus contraction by altering the sensitivity of GABAARs to pregnanolone. In the lungs, pi-containing GABAARs contribute to pulmonary fluid transport via luminal secretion of chloride. This chain is Gamma-aminobutyric acid receptor subunit pi (GABRP), found in Bos taurus (Bovine).